The following is a 420-amino-acid chain: Gamma-glutamyl phosphate reductase (420 aa).

Belongs to the gamma-glutamyl phosphate reductase family.

The protein localises to the cytoplasm. It carries out the reaction L-glutamate 5-semialdehyde + phosphate + NADP(+) = L-glutamyl 5-phosphate + NADPH + H(+). It participates in amino-acid biosynthesis; L-proline biosynthesis; L-glutamate 5-semialdehyde from L-glutamate: step 2/2. Its function is as follows. Catalyzes the NADPH-dependent reduction of L-glutamate 5-phosphate into L-glutamate 5-semialdehyde and phosphate. The product spontaneously undergoes cyclization to form 1-pyrroline-5-carboxylate. The sequence is that of Gamma-glutamyl phosphate reductase from Streptococcus pneumoniae (strain P1031).